A 576-amino-acid polypeptide reads, in one-letter code: D-lactate dehydrogenase [cytochrome], mitochondrial (576 aa).

The FAD-binding PCMH-type domain maps to 139-320; it reads EANQRPEIVL…TEATIKCHVR (182 aa).

Belongs to the FAD-binding oxidoreductase/transferase type 4 family. FAD is required as a cofactor. Requires Zn(2+) as cofactor.

The protein localises to the mitochondrion matrix. The catalysed reaction is (R)-lactate + 2 Fe(III)-[cytochrome c] = 2 Fe(II)-[cytochrome c] + pyruvate + 2 H(+). In terms of biological role, catalyzes the stereospecific oxidation of D-lactate to pyruvate. The chain is D-lactate dehydrogenase [cytochrome], mitochondrial (DLD1) from Kluyveromyces lactis (strain ATCC 8585 / CBS 2359 / DSM 70799 / NBRC 1267 / NRRL Y-1140 / WM37) (Yeast).